Here is a 124-residue protein sequence, read N- to C-terminus: MAETSKADGGRLTTHVLDTATGKPAAGLSIALYRLDGSARTHLKTVATNADGRCDAALLAGAEFRAGEYELVFAAGDYLRGQGTKLPEPAFLDSVPIRFGMAEAVHYHVPLLISPYGYSTYRGS.

The substrate site is built by H15, R53, and Y121.

This sequence belongs to the transthyretin family. 5-hydroxyisourate hydrolase subfamily. As to quaternary structure, homotetramer.

The catalysed reaction is 5-hydroxyisourate + H2O = 5-hydroxy-2-oxo-4-ureido-2,5-dihydro-1H-imidazole-5-carboxylate + H(+). In terms of biological role, catalyzes the hydrolysis of 5-hydroxyisourate (HIU) to 2-oxo-4-hydroxy-4-carboxy-5-ureidoimidazoline (OHCU). This Mesorhizobium japonicum (strain LMG 29417 / CECT 9101 / MAFF 303099) (Mesorhizobium loti (strain MAFF 303099)) protein is 5-hydroxyisourate hydrolase.